The chain runs to 161 residues: Lipoprotein signal peptidase (161 aa).

Transmembrane regions (helical) follow at residues 9–29 (ISLL…WLIT), 63–83 (KMLF…IFYI), and 88–108 (FNLF…GNFI). Residues Asp-118 and Asp-136 contribute to the active site. Residues 131-151 (IFNIADSSLTIGVIFVIIALI) traverse the membrane as a helical segment.

It belongs to the peptidase A8 family.

The protein resides in the cell membrane. The catalysed reaction is Release of signal peptides from bacterial membrane prolipoproteins. Hydrolyzes -Xaa-Yaa-Zaa-|-(S,diacylglyceryl)Cys-, in which Xaa is hydrophobic (preferably Leu), and Yaa (Ala or Ser) and Zaa (Gly or Ala) have small, neutral side chains.. It functions in the pathway protein modification; lipoprotein biosynthesis (signal peptide cleavage). Its function is as follows. This protein specifically catalyzes the removal of signal peptides from prolipoproteins. In Staphylococcus epidermidis (strain ATCC 12228 / FDA PCI 1200), this protein is Lipoprotein signal peptidase.